The following is a 365-amino-acid chain: Phosphoserine aminotransferase (365 aa).

Residue Arg42 coordinates L-glutamate. Pyridoxal 5'-phosphate contacts are provided by residues 76–77, Trp103, Thr154, Asp175, and Gln198; that span reads AR. N6-(pyridoxal phosphate)lysine is present on Lys199. Pyridoxal 5'-phosphate is bound at residue 242–243; sequence NT.

This sequence belongs to the class-V pyridoxal-phosphate-dependent aminotransferase family. SerC subfamily. In terms of assembly, homodimer. Requires pyridoxal 5'-phosphate as cofactor.

Its subcellular location is the cytoplasm. It carries out the reaction O-phospho-L-serine + 2-oxoglutarate = 3-phosphooxypyruvate + L-glutamate. The enzyme catalyses 4-(phosphooxy)-L-threonine + 2-oxoglutarate = (R)-3-hydroxy-2-oxo-4-phosphooxybutanoate + L-glutamate. It participates in amino-acid biosynthesis; L-serine biosynthesis; L-serine from 3-phospho-D-glycerate: step 2/3. Its pathway is cofactor biosynthesis; pyridoxine 5'-phosphate biosynthesis; pyridoxine 5'-phosphate from D-erythrose 4-phosphate: step 3/5. Its function is as follows. Catalyzes the reversible conversion of 3-phosphohydroxypyruvate to phosphoserine and of 3-hydroxy-2-oxo-4-phosphonooxybutanoate to phosphohydroxythreonine. The chain is Phosphoserine aminotransferase from Blochmanniella floridana.